The sequence spans 1062 residues: Roc-COR-CHAT protease (1062 aa).

8 LRR repeats span residues 70 to 94 (LAGLQGLYLAENDFSSLQLPGHLQQ), 95 to 116 (LRLLHLADNKELKTLEFAGSMP), 115 to 141 (MPLLEEIDLSDSGIQTLQLPACPALQK), 142 to 159 (LDVSRSKLEAFSFASACP), 160 to 180 (ALWWLDLSGNGELRKLKMPAG), 181 to 203 (FKALQYLYLYKSGIQELQINGKL), 204 to 226 (PKLVVLDLEGNQLKQWPEKLLLP), and 228 to 249 (GLETLYLEGNPIENIPETIRGS). In terms of domain architecture, COR spans 470-660 (DWLGVMEELQ…GLMWKDNVVF (191 aa)). The tract at residues 836–856 (ERDNDHTGLSDSSDQEDETFT) is disordered. Catalysis depends on residues H931 and C980.

Its function is as follows. A dedicated protease for substrate gasdermin bGSDM; cleaves the bGSDM precursor, releasing the pore-forming moiety, which integrates into the membrane and triggers cell death. Probably involved in defense against bacteriophages. Expression of bGSDM and this neighboring protease is highly toxic in E.coli. The chain is Roc-COR-CHAT protease from Unknown prokaryotic organism.